Here is a 224-residue protein sequence, read N- to C-terminus: Probable Brix domain-containing ribosomal biogenesis protein (224 aa).

Positions 1–196 constitute a Brix domain; that stretch reads MMLITTSHRP…IWIMEDGRRW (196 aa).

Its function is as follows. Probably involved in the biogenesis of the ribosome. The polypeptide is Probable Brix domain-containing ribosomal biogenesis protein (Pyrococcus abyssi (strain GE5 / Orsay)).